The sequence spans 240 residues: MIIFPAIDIRNGKCVRLRQGDYNQETIYSNSPVEMAKEWEASGAEYLHTVDLDGAKSGESNNINIIQDVAQALSIPIQVGGGIRSLEVIDKYIQAGVSRVILGTAAITDSVFLQTAVESYAEKIAVSIDARNGFIATDGWTKNSTVEAIPFIKQLESIGVKTIIYTDILKDGMMSGPNFQELDAVQQATTMNIIASGGVTTEKDVQQLKTMNLYGAIIGKALYDGSIKLQDILEGEMDAR.

D8 acts as the Proton acceptor in catalysis. D129 functions as the Proton donor in the catalytic mechanism.

Belongs to the HisA/HisF family.

It is found in the cytoplasm. The catalysed reaction is 1-(5-phospho-beta-D-ribosyl)-5-[(5-phospho-beta-D-ribosylamino)methylideneamino]imidazole-4-carboxamide = 5-[(5-phospho-1-deoxy-D-ribulos-1-ylimino)methylamino]-1-(5-phospho-beta-D-ribosyl)imidazole-4-carboxamide. The protein operates within amino-acid biosynthesis; L-histidine biosynthesis; L-histidine from 5-phospho-alpha-D-ribose 1-diphosphate: step 4/9. The chain is 1-(5-phosphoribosyl)-5-[(5-phosphoribosylamino)methylideneamino] imidazole-4-carboxamide isomerase from Oceanobacillus iheyensis (strain DSM 14371 / CIP 107618 / JCM 11309 / KCTC 3954 / HTE831).